The following is a 292-amino-acid chain: GTP cyclohydrolase FolE2 (292 aa).

This sequence belongs to the GTP cyclohydrolase IV family.

The enzyme catalyses GTP + H2O = 7,8-dihydroneopterin 3'-triphosphate + formate + H(+). It participates in cofactor biosynthesis; 7,8-dihydroneopterin triphosphate biosynthesis; 7,8-dihydroneopterin triphosphate from GTP: step 1/1. In terms of biological role, converts GTP to 7,8-dihydroneopterin triphosphate. The chain is GTP cyclohydrolase FolE2 from Staphylococcus aureus (strain Newman).